A 213-amino-acid chain; its full sequence is Redox-sensing transcriptional repressor Rex (213 aa).

The segment at residues 18–57 is a DNA-binding region (H-T-H motif); the sequence is LYYRIFKRFHAEKIERANSKQIAEAIGIDSATVRRDFSYF. 92-97 provides a ligand contact to NAD(+); sequence GIGNMG.

This sequence belongs to the transcriptional regulatory Rex family. As to quaternary structure, homodimer.

It is found in the cytoplasm. Modulates transcription in response to changes in cellular NADH/NAD(+) redox state. Binds to the promoter of the aldehyde-alcohol dehydrogenase adhE gene. Functions as a redox-dependent repressor of adhE expression. This Streptococcus pneumoniae (strain ATCC BAA-255 / R6) protein is Redox-sensing transcriptional repressor Rex.